Reading from the N-terminus, the 358-residue chain is Peptide chain release factor 1 (358 aa).

The residue at position 236 (Gln-236) is an N5-methylglutamine.

This sequence belongs to the prokaryotic/mitochondrial release factor family. Post-translationally, methylated by PrmC. Methylation increases the termination efficiency of RF1.

It localises to the cytoplasm. Peptide chain release factor 1 directs the termination of translation in response to the peptide chain termination codons UAG and UAA. This is Peptide chain release factor 1 from Corynebacterium glutamicum (strain ATCC 13032 / DSM 20300 / JCM 1318 / BCRC 11384 / CCUG 27702 / LMG 3730 / NBRC 12168 / NCIMB 10025 / NRRL B-2784 / 534).